Here is a 478-residue protein sequence, read N- to C-terminus: Ribulose bisphosphate carboxylase large chain (478 aa).

A propeptide spanning residues 1-2 (MS) is cleaved from the precursor. Pro3 is subject to N-acetylproline. Lys14 is modified (N6,N6,N6-trimethyllysine). Positions 123 and 173 each coordinate substrate. The active-site Proton acceptor is the Lys175. Lys177 provides a ligand contact to substrate. Positions 201, 203, and 204 each coordinate Mg(2+). An N6-carboxylysine modification is found at Lys201. His294 (proton acceptor) is an active-site residue. Substrate is bound by residues Arg295, His327, and Ser379.

Belongs to the RuBisCO large chain family. Type I subfamily. As to quaternary structure, heterohexadecamer of 8 large chains and 8 small chains; disulfide-linked. The disulfide link is formed within the large subunit homodimers. It depends on Mg(2+) as a cofactor. Post-translationally, the disulfide bond which can form in the large chain dimeric partners within the hexadecamer appears to be associated with oxidative stress and protein turnover.

The protein localises to the plastid. It is found in the chloroplast. It carries out the reaction 2 (2R)-3-phosphoglycerate + 2 H(+) = D-ribulose 1,5-bisphosphate + CO2 + H2O. The catalysed reaction is D-ribulose 1,5-bisphosphate + O2 = 2-phosphoglycolate + (2R)-3-phosphoglycerate + 2 H(+). In terms of biological role, ruBisCO catalyzes two reactions: the carboxylation of D-ribulose 1,5-bisphosphate, the primary event in carbon dioxide fixation, as well as the oxidative fragmentation of the pentose substrate in the photorespiration process. Both reactions occur simultaneously and in competition at the same active site. This Drimys granadensis protein is Ribulose bisphosphate carboxylase large chain.